Here is a 621-residue protein sequence, read N- to C-terminus: KIF-binding protein (621 aa).

S178 carries the post-translational modification Phosphoserine.

It belongs to the KIF-binding protein family. In terms of assembly, interacts with KIF1B; positively regulates KIF1B microtubule motor activity. Interacts with STMN2.

The protein resides in the cytoplasm. It is found in the cytoskeleton. Functionally, activator of KIF1B plus-end-directed microtubule motor activity. Required for organization of axonal microtubules, and axonal outgrowth and maintenance during peripheral and central nervous system development. The sequence is that of KIF-binding protein (KIFBP) from Bos taurus (Bovine).